A 358-amino-acid polypeptide reads, in one-letter code: MTHSPESNPTVSAAEAAELIRSLLHKEGTWVDWGKKCQQLQKAGYGAEEIFEQSGFQKVQQNLVIVASQVYESLVKQGIDETVLSYYRGPKSDVLYELRILNHQQRAIAAVEAQQKNLAADEAKELAKAFQEFGYLSQLPEGFTDHPGDALAYQCWKLARQKKNLPERTRLIVKGLKFAHSPNARQAIEKLLTDLTAQPSRKAPLVPVFRLEEDQEAARLIPVAGTFPLQPQAVQAVQSLEQVEPFGLVSYQGEGAVVPVPQWQAILTAEDPVAIFCPAGQVSESLARKDEQVLVVVDRSKKIWNDGSYFLLNQGETVAIQWCETEPEREILAQVVLVLRPKKIFDANNLREPWQMDD.

Residues 11 to 194 form an N-terminal alpha-helix region; sequence VSAAEAAELI…RQAIEKLLTD (184 aa). Residues 218–344 form a C-terminal beta-sheet region; the sequence is ARLIPVAGTF…VVLVLRPKKI (127 aa).

This sequence belongs to the RAF family. Homodimer. Forms an RbcL(8)-Raf1(8) complex. Forms complexes of many stoichiometries with RbcL with and without RbcS. RbcX and Raf1 can bind simultaneously to RbcL. Interacts with both RuBisCO subunits (ccbL, ccbS), GroEL, DnaK and alpha and beta phycocyanin (cpcA, cpcB) in pull-down experiments with tagged protein. C-terminally tagged Raf1 does not interact with either RuBisCO subunit, suggesting its C-terminus is involved in binding.

The protein resides in the cytoplasm. Functionally, a major RuBisCO chaperone. Acts after GroEL-GroES chaperonin to fold and/or assemble the large subunit of RuBisCO (ccbL, rbcL). Cooperates with RbcX in RbcL folding, plays the major role in assembly of dimers into RbcL(8)-Raf1(8) intermediate complexes. RbcS replaces Raf1, leading to holoenzyme formation. In terms of biological role, required for optimal reconstitution of RbcL(8) upon expression in E.coli. Has been suggested to be involved in RuBisCO recycling and homeostasis rather than assembly. The sequence is that of RuBisCO accumulation factor 1 from Synechocystis sp. (strain ATCC 27184 / PCC 6803 / Kazusa).